Reading from the N-terminus, the 98-residue chain is Acylphosphatase (98 aa).

The Acylphosphatase-like domain occupies 12–98 (TYYVRVRGVV…DKRFERFQQH (87 aa)). Active-site residues include R27 and N45.

It belongs to the acylphosphatase family.

It carries out the reaction an acyl phosphate + H2O = a carboxylate + phosphate + H(+). This Burkholderia thailandensis (strain ATCC 700388 / DSM 13276 / CCUG 48851 / CIP 106301 / E264) protein is Acylphosphatase (acyP).